A 307-amino-acid chain; its full sequence is MKLIFAGTPEFAAQALQGIVNAGHEVALVLTQPDRPAGRGMALQPSAVKKVALTHGIEVFQPLTLKDAEAQARIAAVGAEIMVVAAYGLILPQVVLDMPRFGCINIHGSLLPRWRGAAPIQRALLAGDAETGVCIMQMEAGLDTGPVLLRGAFPIAATDTTATLHDRLAELGARLVVEALGKLPLPAEPQPADGVTYAQKIEKAEAMIDWSKSAAELDRHIRAFNPFPGAQALFRGQTVKLWQASPVAGRGETGAILAVDKNSIIIACGEGALAVTELQKAGGKRLPVQQFLAGHPLAVGDRFDIPA.

(6S)-5,6,7,8-tetrahydrofolate is bound at residue 109 to 112 (SLLP).

It belongs to the Fmt family.

The enzyme catalyses L-methionyl-tRNA(fMet) + (6R)-10-formyltetrahydrofolate = N-formyl-L-methionyl-tRNA(fMet) + (6S)-5,6,7,8-tetrahydrofolate + H(+). Attaches a formyl group to the free amino group of methionyl-tRNA(fMet). The formyl group appears to play a dual role in the initiator identity of N-formylmethionyl-tRNA by promoting its recognition by IF2 and preventing the misappropriation of this tRNA by the elongation apparatus. The polypeptide is Methionyl-tRNA formyltransferase (Dechloromonas aromatica (strain RCB)).